A 71-amino-acid chain; its full sequence is Large ribosomal subunit protein uL29 (71 aa).

This sequence belongs to the universal ribosomal protein uL29 family.

In Rickettsia africae (strain ESF-5), this protein is Large ribosomal subunit protein uL29.